Here is a 179-residue protein sequence, read N- to C-terminus: Replication restart protein DnaT (179 aa).

The span at 151–168 (SRSSNGGMPQRDINSVSE) shows a compositional bias: polar residues. A disordered region spans residues 151–179 (SRSSNGGMPQRDINSVSEPDNHIPPGFRG).

Belongs to the DnaT family. In terms of assembly, homooligomerizes. Interacts with PriB. Component of the replication restart primosome. Primosome assembly occurs via a 'hand-off' mechanism. PriA binds to replication forks, subsequently PriB then DnaT bind; DnaT then displaces ssDNA to generate the helicase loading substrate.

In terms of biological role, involved in the restart of stalled replication forks, which reloads the replicative helicase on sites other than the origin of replication. Can function in multiple replication restart pathways. Displaces ssDNA from a PriB-ssDNA complex. Probably forms a spiral filament on ssDNA. The chain is Replication restart protein DnaT from Salmonella arizonae (strain ATCC BAA-731 / CDC346-86 / RSK2980).